A 440-amino-acid polypeptide reads, in one-letter code: Trigger factor (440 aa).

One can recognise a PPIase FKBP-type domain in the interval 163–248; that stretch reads GEIVSVTFEA…VHVIKERTLP (86 aa).

Belongs to the FKBP-type PPIase family. Tig subfamily.

The protein localises to the cytoplasm. It catalyses the reaction [protein]-peptidylproline (omega=180) = [protein]-peptidylproline (omega=0). Functionally, involved in protein export. Acts as a chaperone by maintaining the newly synthesized protein in an open conformation. Functions as a peptidyl-prolyl cis-trans isomerase. This Solidesulfovibrio magneticus (strain ATCC 700980 / DSM 13731 / RS-1) (Desulfovibrio magneticus) protein is Trigger factor.